Here is a 175-residue protein sequence, read N- to C-terminus: Protein FanH (175 aa).

The first 20 residues, 1–20, serve as a signal peptide directing secretion; that stretch reads MIKKVPVLLFFMASISITHA. A disulfide bridge links C39 with C77.

Its subcellular location is the fimbrium. Its function is as follows. Involved in the biosynthesis of K99 fimbriae. The sequence is that of Protein FanH (fanH) from Escherichia coli.